The primary structure comprises 37 residues: Large ribosomal subunit protein bL36 (37 aa).

It belongs to the bacterial ribosomal protein bL36 family.

In Legionella pneumophila subsp. pneumophila (strain Philadelphia 1 / ATCC 33152 / DSM 7513), this protein is Large ribosomal subunit protein bL36.